The chain runs to 230 residues: MNLFGKSNFNCVFSSSLDWFHSSRLSEKVGTKKNRICRETESFYALCLSHRRYLCYALEGLLPSRPRGRRASTYNCSDNLGYIRGLNGKQKQLIKKLVHICMIDGKKTRSRAIVYKTFHRLAPHGDVIKLLVNAIENVKPICEVKKVRISGTTRLVPSIIATNRQETLAIRWMLESAAKRRMGKKSISLDQCLYAEILEASQKMGIARKKRDDLHKLAEANRSFSHYRWW.

This sequence belongs to the universal ribosomal protein uS7 family. In terms of assembly, part of the small ribosomal subunit.

The protein localises to the mitochondrion. Functionally, one of the primary rRNA binding proteins, it binds directly to 18S rRNA where it nucleates assembly of the head domain of the small subunit. This Marchantia polymorpha (Common liverwort) protein is Small ribosomal subunit protein uS7m (RPS7).